The primary structure comprises 194 residues: Large ribosomal subunit protein bL12m (194 aa).

The N-terminal 33 residues, 1–33 (MSLRILAKRSSSIWMKTRVTPALISPITITTRF), are a transit peptide targeting the mitochondrion. A glycan (N-linked (GlcNAc...) asparagine) is linked at N34. Residues 101-120 (AGNVPSSTGEAGSGAEEEAK) are disordered. Low complexity predominate over residues 105–114 (PSSTGEAGSG).

Belongs to the bacterial ribosomal protein bL12 family. In terms of assembly, component of the mitochondrial large ribosomal subunit (mt-LSU). Mature yeast 74S mitochondrial ribosomes consist of a small (37S) and a large (54S) subunit. The 37S small subunit contains a 15S ribosomal RNA (15S mt-rRNA) and 34 different proteins. The 54S large subunit contains a 21S rRNA (21S mt-rRNA) and 46 different proteins. Post-translationally, N-glycosylated.

The protein resides in the mitochondrion. Functionally, component of the mitochondrial ribosome (mitoribosome), a dedicated translation machinery responsible for the synthesis of mitochondrial genome-encoded proteins, including at least some of the essential transmembrane subunits of the mitochondrial respiratory chain. The mitoribosomes are attached to the mitochondrial inner membrane and translation products are cotranslationally integrated into the membrane. This chain is Large ribosomal subunit protein bL12m (MNP1), found in Saccharomyces cerevisiae (strain ATCC 204508 / S288c) (Baker's yeast).